Consider the following 347-residue polypeptide: Dihydroorotase (347 aa).

2 residues coordinate Zn(2+): His-13 and His-15. Substrate is bound by residues 15 to 17 and Asn-41; that span reads HLR. Zn(2+) is bound by residues Lys-99, His-136, and His-174. N6-carboxylysine is present on Lys-99. His-136 contacts substrate. Leu-219 provides a ligand contact to substrate. Residue Asp-247 participates in Zn(2+) binding. Residue Asp-247 is part of the active site. The substrate site is built by His-251 and Ala-263.

It belongs to the metallo-dependent hydrolases superfamily. DHOase family. Class II DHOase subfamily. As to quaternary structure, homodimer. Zn(2+) is required as a cofactor.

The catalysed reaction is (S)-dihydroorotate + H2O = N-carbamoyl-L-aspartate + H(+). Its pathway is pyrimidine metabolism; UMP biosynthesis via de novo pathway; (S)-dihydroorotate from bicarbonate: step 3/3. Its function is as follows. Catalyzes the reversible cyclization of carbamoyl aspartate to dihydroorotate. In Sinorhizobium medicae (strain WSM419) (Ensifer medicae), this protein is Dihydroorotase.